Reading from the N-terminus, the 63-residue chain is Large ribosomal subunit protein eL37 (63 aa).

4 residues coordinate Zn(2+): Cys-20, Cys-23, Cys-35, and Cys-38. The segment at 20-38 adopts a C4-type zinc-finger fold; that stretch reads CRRCGRHSFNVRKGYCVAC.

The protein belongs to the eukaryotic ribosomal protein eL37 family. Zn(2+) is required as a cofactor.

Its function is as follows. Binds to the 23S rRNA. The chain is Large ribosomal subunit protein eL37 from Ignicoccus hospitalis (strain KIN4/I / DSM 18386 / JCM 14125).